An 85-amino-acid chain; its full sequence is Large ribosomal subunit protein bL31B (85 aa).

The protein belongs to the bacterial ribosomal protein bL31 family. Type B subfamily. Part of the 50S ribosomal subunit.

In Clavibacter michiganensis subsp. michiganensis (strain NCPPB 382), this protein is Large ribosomal subunit protein bL31B.